Reading from the N-terminus, the 128-residue chain is Claw keratin (128 aa).

2 repeat units span residues 83–91 and 92–100. A 3 X 9 AA tandem repeats, Gly-rich region spans residues 83–104; sequence GGYGGLGGYGGYGGLGGYGGYG. The stretch at 101 to 109 is one 3; approximate repeat; that stretch reads GGYGGFGSC.

This sequence belongs to the avian keratin family. In terms of tissue distribution, abundantly expressed in the claw and at a low level in feather tissue.

This chain is Claw keratin (CKER1), found in Gallus gallus (Chicken).